Here is a 423-residue protein sequence, read N- to C-terminus: AP-1 complex subunit mu-2 (423 aa).

Residues 168-421 (KNEVFIDVIE…ITQSGDYQLR (254 aa)) form the MHD domain.

This sequence belongs to the adaptor complexes medium subunit family. As to quaternary structure, adaptor protein complex 1 (AP-1) is a heterotetramer composed of two large adaptins (gamma-type subunit AP1G1 and beta-type subunit AP1B1), a medium adaptin (mu-type subunit AP1M1 or AP1M2) and a small adaptin (sigma-type subunit AP1S1 or AP1S2 or AP1S3). Interacts with P2X4. In terms of processing, phosphorylation of membrane-bound AP1M1/AP1M2 increases its affinity for sorting signals.

Its subcellular location is the cytoplasmic vesicle. The protein localises to the clathrin-coated vesicle membrane. It localises to the golgi apparatus. Its function is as follows. Subunit of clathrin-associated adaptor protein complex 1 that plays a role in protein sorting in the trans-Golgi network (TGN) and endosomes. The AP complexes mediate the recruitment of clathrin to membranes and the recognition of sorting signals within the cytosolic tails of transmembrane cargo molecules. The chain is AP-1 complex subunit mu-2 from Bos taurus (Bovine).